Reading from the N-terminus, the 346-residue chain is Protein Rae1 (346 aa).

WD repeat units follow at residues 17-61, 64-105, 126-148, and 255-289; these read ASPP…ATVP, MKTM…VMQV, LMTGSWDKTLKFWDTRSPNPMMT, and VNDIAFHPVHGTLVTVGSDGTFSFWDKDARTKLKS.

It belongs to the WD repeat rae1 family. As to quaternary structure, interacts with hiw; the interaction with Rae1 may protect hiw from autophagy-mediated degradation. Interacts with Nup98-96. As to expression, head (at protein level).

It localises to the cytoplasm. The protein resides in the perinuclear region. It is found in the nucleus. The protein localises to the nucleus envelope. Its subcellular location is the chromosome. Its function is as follows. Probable component of the nuclear pore complex (NPC) which regulates the nuclear export of specific mRNAs and promotes cell cycle progression during mitosis and male meiosis. Acts with Nup98-96 to promote the nuclear export of specific mRNAs such as Moe, however it does not appear to be required for general nuclear mRNA transport. Essential mitotic and male meiotic cell cycle regulator with roles in many aspects of the cell cycle including chromatin organization and condensation, spindle assembly, chromosome segregation, and maintaining nuclear structure. During male meiosis it is required for completion of meiosis I, as well as accurate cytokinesis of the secondary spermatocytes, and postmeiotic differentiation of spermatids. Acts as a downstream regulatory target of the Hippo/SWH (Sav/Wts/Hpo) signaling pathway to promote mitotic cell cycle progression and proliferation during wing and eye development, and thereby plays a key role in integrating the regulation of proliferation with organ size control. When the Hippo/SWH signaling pathway is inactive, Rae1 acts independently of yki to increase organ size by promoting mitotic S-phase entry and increase cellular proliferation. When the Hippo/SWH signaling pathway is active it inhibits the activity of Rae1 in a Wts-dependent manner to restrict organ growth. However, Rae1 is also able to negatively regulate the levels and activity of yki likely by activating the core kinases of the Hippo/SWH signaling pathway hpo and Wts and increasing the protein levels of hpo, Mer and Wts; it is therefore likely that it functions as part of a negative feedback loop with the Hippo/SWH signaling pathway to regulate pathway homeostasis and prevent organ overgrowth. Promotes mitotic cell cycle progression, at least in part, by increasing the accumulation of mitotic cyclins such as CycB, possibly by directly up-regulating cyclin transcripts or by inhibiting the anaphase promoting complex/cyclosome (APC/C) activator fzy. Also required in presynaptic, postmitotic motor neurons to restrain synaptic terminal growth. Promotes the expression and stability of the an E3 ubiquitin ligase of hiw, and is likely to function in the regulation of synaptic growth by binding to hiw and protecting it from autophagy-mediated degradation. In Drosophila melanogaster (Fruit fly), this protein is Protein Rae1.